A 962-amino-acid polypeptide reads, in one-letter code: Translation initiation factor IF-2 (962 aa).

Disordered stretches follow at residues 122 to 263 (EVGV…EPAR), 293 to 327 (TEEV…TRRK), and 341 to 362 (IAAQ…AKEP). A compositionally biased stretch (low complexity) spans 156–173 (AVEPQTVVPPVAAPAAEV). Residues 188–202 (KPPEEKETKVKHAEP) are compositionally biased toward basic and acidic residues. A compositionally biased stretch (basic residues) spans 244–256 (RPKKAKKRRRKKV). Basic and acidic residues-rich tracts occupy residues 308-327 (RPEE…TRRK) and 344-362 (QDDR…AKEP). Positions 455 to 624 (RRPPVITVMG…LLQAELLELK (170 aa)) constitute a tr-type G domain. The G1 stretch occupies residues 464–471 (GHVDHGKT). Position 464-471 (464-471 (GHVDHGKT)) interacts with GTP. Residues 489–493 (GITQH) form a G2 region. The interval 510-513 (DTPG) is G3. Residues 510–514 (DTPGH) and 564–567 (NKVD) contribute to the GTP site. The G4 stretch occupies residues 564-567 (NKVD). Residues 600–602 (SAK) form a G5 region.

It belongs to the TRAFAC class translation factor GTPase superfamily. Classic translation factor GTPase family. IF-2 subfamily.

It is found in the cytoplasm. One of the essential components for the initiation of protein synthesis. Protects formylmethionyl-tRNA from spontaneous hydrolysis and promotes its binding to the 30S ribosomal subunits. Also involved in the hydrolysis of GTP during the formation of the 70S ribosomal complex. The polypeptide is Translation initiation factor IF-2 (Syntrophobacter fumaroxidans (strain DSM 10017 / MPOB)).